The primary structure comprises 847 residues: B-cell receptor CD22 (847 aa).

An N-terminal signal peptide occupies residues 1-19; sequence MHLLGPWLLLLVLEYLAFS. In terms of domain architecture, Ig-like V-type spans 20 to 138; the sequence is DSSKWAFEHP…MERIHLNVSE (119 aa). Over 20 to 687 the chain is Extracellular; it reads DSSKWAFEHP…YYSPETIGRR (668 aa). 3 N-linked (GlcNAc...) asparagine glycosylation sites follow: asparagine 67, asparagine 101, and asparagine 112. Arginine 120 contacts N-acetylneuraminate. 3 N-linked (GlcNAc...) asparagine glycosylation sites follow: asparagine 135, asparagine 164, and asparagine 231. 6 Ig-like C2-type domains span residues 143–235, 242–326, 331–416, 419–500, 505–582, and 593–676; these read PHIQ…DTVQ, PKLE…VFLQ, PEPS…LDVQ, PKKV…VALN, PRDV…QTAS, and PRRL…STLT. Cysteine 161 and cysteine 219 form a disulfide bridge. Intrachain disulfides connect cysteine 265–cysteine 309 and cysteine 353–cysteine 396. N-linked (GlcNAc...) asparagine glycans are attached at residues asparagine 363, asparagine 428, asparagine 445, asparagine 448, and asparagine 479. 2 cysteine pairs are disulfide-bonded: cysteine 442-cysteine 484 and cysteine 529-cysteine 571. N-linked (GlcNAc...) asparagine glycans are attached at residues asparagine 574 and asparagine 634. A disulfide bridge connects residues cysteine 616 and cysteine 659. Residues 688–708 traverse the membrane as a helical segment; sequence VAVGFGSCLAILILAICGLKL. Over 709 to 847 the chain is Cytoplasmic; that stretch reads QRRWKRTQSQ…ENVDYVILKH (139 aa). Phosphoserine occurs at positions 725, 726, and 729. 2 consecutive short sequence motifs (ITIM motif) follow at residues 760-765 and 794-799; these read ISYTTL and VTYSVL. Residue tyrosine 762 is modified to Phosphotyrosine. 3 positions are modified to phosphotyrosine: tyrosine 807, tyrosine 822, and tyrosine 842. 2 consecutive short sequence motifs (ITIM motif) follow at residues 820–825 and 840–845; these read IHYSEL and VDYVIL.

It belongs to the immunoglobulin superfamily. SIGLEC (sialic acid binding Ig-like lectin) family. Predominantly monomer of isoform CD22-beta. Also found as heterodimer of isoform CD22-beta and a shorter isoform. Interacts with PTPN6/SHP-1, LYN, SYK, PIK3R1/PIK3R2 and PLCG1 upon phosphorylation. Interacts with GRB2, INPP5D and SHC1 upon phosphorylation. May form a complex with INPP5D/SHIP, GRB2 and SHC1. Post-translationally, phosphorylation of Tyr-762, Tyr-807 and Tyr-822 are involved in binding to SYK, GRB2 and SYK, respectively. Phosphorylation of Tyr-842 is involved in binding to SYK, PLCG2 and PIK3R1/PIK3R2. Phosphorylated on tyrosine residues by LYN.

It is found in the cell membrane. Functionally, most highly expressed siglec (sialic acid-binding immunoglobulin-like lectin) on B-cells that plays a role in various aspects of B-cell biology including differentiation, antigen presentation, and trafficking to bone marrow. Binds to alpha 2,6-linked sialic acid residues of surface molecules such as CD22 itself, CD45 and IgM in a cis configuration. Can also bind to ligands on other cells as an adhesion molecule in a trans configuration. Acts as an inhibitory coreceptor on the surface of B-cells and inhibits B-cell receptor induced signaling, characterized by inhibition of the calcium mobilization and cellular activation. Mechanistically, the immunoreceptor tyrosine-based inhibitory motif domain is phosphorylated by the Src kinase LYN, which in turn leads to the recruitment of the protein tyrosine phosphatase 1/PTPN6, leading to the negative regulation of BCR signaling. If this negative signaling from is of sufficient strength, apoptosis of the B-cell can be induced. This is B-cell receptor CD22 from Pan paniscus (Pygmy chimpanzee).